The following is a 420-amino-acid chain: MSNVRYISNLTRETYALILAGGRGSRLHELTDWRAKPALYFGGKFRIIDFPLSNCINSGVRRVGVVTQYKSHSLIRHVMRGWGHFKKELGESVEILPASQRFSENWYQGTADAVFQNIDIIRHELPKYVMVLSGDHVYRMDYAGILAAHAESGADMTVSCLEVPIAEAAGAFGVIEVDDNMRILGFEEKPQRPKPSPDNPEMCLASMGNYVFNTEFLFEQLKKDSQNATSDRDFGKDIIPSIIEKHNVFAYPFKSPFPNEQAYWRDVGTLDSFWQANMELLSPTPALNLYDAKWPIWTFQEQLPPAKFVFDDDDRRGMALDSIVSSGCIISGATVRRSVLFNEVRVCSYSVVEDSVVLPDVVVLRHCKIKNAIIDRGCIIPEGTVIGYNHDHDRAKGFRVSEKGVTLVTRDMLGLPVGYE.

Alpha-D-glucose 1-phosphate-binding positions include Y107, G173, 188 to 189 (EK), and S206.

It belongs to the bacterial/plant glucose-1-phosphate adenylyltransferase family. As to quaternary structure, homotetramer.

It catalyses the reaction alpha-D-glucose 1-phosphate + ATP + H(+) = ADP-alpha-D-glucose + diphosphate. The protein operates within glycan biosynthesis; glycogen biosynthesis. Functionally, involved in the biosynthesis of ADP-glucose, a building block required for the elongation reactions to produce glycogen. Catalyzes the reaction between ATP and alpha-D-glucose 1-phosphate (G1P) to produce pyrophosphate and ADP-Glc. This is Glucose-1-phosphate adenylyltransferase from Shewanella sp. (strain W3-18-1).